The primary structure comprises 84 residues: Toxin Tb1 (84 aa).

The signal sequence occupies residues M1–C20. The region spanning K21–G82 is the LCN-type CS-alpha/beta domain. Cystine bridges form between C31–C81, C35–C57, C43–C62, and C47–C64. Position 81 is a cysteine amide (C81).

The protein belongs to the long (4 C-C) scorpion toxin superfamily. Sodium channel inhibitor family. Beta subfamily. In terms of tissue distribution, expressed by the venom gland.

It localises to the secreted. In terms of biological role, beta toxins bind voltage-independently at site-4 of sodium channels (Nav) and shift the voltage of activation toward more negative potentials thereby affecting sodium channel activation and promoting spontaneous and repetitive firing. Is lethal to mice. The protein is Toxin Tb1 of Tityus bahiensis (Brazilian scorpion).